A 213-amino-acid polypeptide reads, in one-letter code: ATP synthase peripheral stalk subunit OSCP, mitochondrial (213 aa).

The N-terminal 23 residues, 1–23 (MAAPAVSGLSRQVRYFSTSVVRP), are a transit peptide targeting the mitochondrion. Positions 5–23 (AVSGLSRQVRYFSTSVVRP) match the SIFI-degron motif. An N6-acetyllysine mark is found at Lys54, Lys60, Lys70, and Lys73. Lys90 is subject to N6-succinyllysine. Lys158 and Lys162 each carry N6-acetyllysine; alternate. 2 positions are modified to N6-succinyllysine; alternate: Lys158 and Lys162. N6-acetyllysine is present on residues Lys172, Lys176, and Lys192. At Lys199 the chain carries N6-succinyllysine.

Belongs to the ATPase delta chain family. Component of the ATP synthase complex composed at least of ATP5F1A/subunit alpha, ATP5F1B/subunit beta, ATP5MC1/subunit c (homooctomer), MT-ATP6/subunit a, MT-ATP8/subunit 8, ATP5ME/subunit e, ATP5MF/subunit f, ATP5MG/subunit g, ATP5MK/subunit k, ATP5MJ/subunit j, ATP5F1C/subunit gamma, ATP5F1D/subunit delta, ATP5F1E/subunit epsilon, ATP5PF/subunit F6, ATP5PB/subunit b, ATP5PD/subunit d, ATP5PO/subunit OSCP. ATP synthase complex consists of a soluble F(1) head domain (subunits alpha(3) and beta(3)) - the catalytic core - and a membrane F(0) domain - the membrane proton channel (subunits c, a, 8, e, f, g, k and j). These two domains are linked by a central stalk (subunits gamma, delta, and epsilon) rotating inside the F1 region and a stationary peripheral stalk (subunits F6, b, d, and OSCP). Post-translationally, acetylation at Lys-162 decreases ATP production. Deacetylated by SIRT3. In response to mitochondrial stress, the precursor protein is ubiquitinated by the SIFI complex in the cytoplasm before mitochondrial import, leading to its degradation. Within the SIFI complex, UBR4 initiates ubiquitin chain that are further elongated or branched by KCMF1.

The protein localises to the mitochondrion. Its subcellular location is the mitochondrion inner membrane. Subunit OSCP, of the mitochondrial membrane ATP synthase complex (F(1)F(0) ATP synthase or Complex V) that produces ATP from ADP in the presence of a proton gradient across the membrane which is generated by electron transport complexes of the respiratory chain. ATP synthase complex consist of a soluble F(1) head domain - the catalytic core - and a membrane F(1) domain - the membrane proton channel. These two domains are linked by a central stalk rotating inside the F(1) region and a stationary peripheral stalk. During catalysis, ATP synthesis in the catalytic domain of F(1) is coupled via a rotary mechanism of the central stalk subunits to proton translocation. In vivo, can only synthesize ATP although its ATP hydrolase activity can be activated artificially in vitro. Part of the complex F(0) domain. Part of the complex F(0) domain and the peripheric stalk, which acts as a stator to hold the catalytic alpha(3)beta(3) subcomplex and subunit a/ATP6 static relative to the rotary elements. The protein is ATP synthase peripheral stalk subunit OSCP, mitochondrial of Plecturocebus moloch (Dusky titi monkey).